A 93-amino-acid chain; its full sequence is Small ribosomal subunit protein uS19 (93 aa).

Residues 73-93 (EFSPTRTFRGHVKDDRKSKRR) are disordered. A compositionally biased stretch (basic and acidic residues) spans 83-93 (HVKDDRKSKRR).

This sequence belongs to the universal ribosomal protein uS19 family.

In terms of biological role, protein S19 forms a complex with S13 that binds strongly to the 16S ribosomal RNA. This Streptomyces avermitilis (strain ATCC 31267 / DSM 46492 / JCM 5070 / NBRC 14893 / NCIMB 12804 / NRRL 8165 / MA-4680) protein is Small ribosomal subunit protein uS19.